The chain runs to 348 residues: N6-Methyl-AMP deaminase (348 aa).

Positions 18 and 20 each coordinate Zn(2+). Residues His-20, Asn-22, His-68, 100–103, Asp-142, and Gly-175 each bind N(6)-methyl-AMP; that span reads STPR. A Zn(2+)-binding site is contributed by His-202. Positions 205, 287, and 288 each coordinate N(6)-methyl-AMP. The active-site Proton donor is the Glu-205. Asp-287 contacts Zn(2+).

Belongs to the metallo-dependent hydrolases superfamily. Adenosine and AMP deaminases family. As to quaternary structure, monomer. Zn(2+) serves as cofactor.

It carries out the reaction N(6)-methyl-AMP + H2O + H(+) = IMP + methylamine. In terms of biological role, catalyzes the hydrolysis of the free cytosolic methylated adenosine nucleotide N(6)-methyl-AMP (N6-mAMP) to produce inositol monophosphate (IMP) and methylamine. Is required for the catabolism of cytosolic N6-mAMP, which is derived from the degradation of mRNA containing N6-methylated adenine (m6A). The polypeptide is N6-Methyl-AMP deaminase (mapda) (Danio rerio (Zebrafish)).